The primary structure comprises 60 residues: uncharacterized protein (60 aa).

The protein resides in the host cytoplasm. This is an uncharacterized protein from Escherichia phage Mu (Bacteriophage Mu).